Consider the following 369-residue polypeptide: Superinfection exclusion protein (369 aa).

Positions 1 to 15 (MIALLILSLTCSVST) are cleaved as a signal peptide.

Belongs to the serpin family. Orthopoxvirus OPG040 subfamily. As to quaternary structure, interacts with A56 protein.

It localises to the virion membrane. The protein localises to the host cell membrane. Prevents cell to cell fusion via its interaction with A56 protein. The A56-K2 complex associates with components of the entry fusion complex (EFC) presumably to avoid superinfection and syncytium formation. This chain is Superinfection exclusion protein (OPG040), found in Vaccinia virus (strain Copenhagen) (VACV).